The following is a 455-amino-acid chain: Ribosomal protein uS12 methylthiotransferase RimO (455 aa).

In terms of domain architecture, MTTase N-terminal spans 1-114; that stretch reads MKYHIVTLGC…INALVGQLER (114 aa). [4Fe-4S] cluster-binding residues include C10, C46, C78, C166, C170, and C173. One can recognise a Radical SAM core domain in the interval 152–383; it reads THQTPSAYLK…MRLQQTISYT (232 aa). One can recognise a TRAM domain in the interval 386–455; that stretch reads QRWVGRTIKV…AYDLWGEALS (70 aa).

The protein belongs to the methylthiotransferase family. RimO subfamily. Requires [4Fe-4S] cluster as cofactor.

The protein resides in the cytoplasm. It catalyses the reaction L-aspartate(89)-[ribosomal protein uS12]-hydrogen + (sulfur carrier)-SH + AH2 + 2 S-adenosyl-L-methionine = 3-methylsulfanyl-L-aspartate(89)-[ribosomal protein uS12]-hydrogen + (sulfur carrier)-H + 5'-deoxyadenosine + L-methionine + A + S-adenosyl-L-homocysteine + 2 H(+). Functionally, catalyzes the methylthiolation of an aspartic acid residue of ribosomal protein uS12. The protein is Ribosomal protein uS12 methylthiotransferase RimO of Chloroflexus aurantiacus (strain ATCC 29366 / DSM 635 / J-10-fl).